Consider the following 95-residue polypeptide: Late cornified envelope protein 3B (95 aa).

Low complexity predominate over residues 1 to 13; the sequence is MSCQQNQQQCQPL. 2 disordered regions span residues 1–29 and 68–95; these read MSCQ…SAQC and RQSS…GGCC.

Belongs to the LCE family. In terms of tissue distribution, skin-specific. Expression was readily detected in adult trunk skin, adult arm skin, fetal skin, penal skin, vulva, esophagus and tongue. Not expressed in the cervix, rectum, lung, colon, or placenta.

Its function is as follows. A structural component of the cornified envelope of the stratum corneum involved in innate cutaneous host defense. Possesses defensin-like antimicrobial activity against a broad spectrum of Gram-positive and Gram-negative bacteria, both aerobic and anaerobic species. Upon inflammation, may regulate skin barrier repair by shaping cutaneous microbiota composition and immune response to bacterial antigens. In Homo sapiens (Human), this protein is Late cornified envelope protein 3B.